A 156-amino-acid chain; its full sequence is D-aminoacyl-tRNA deacylase (156 aa).

Positions 142–143 match the Gly-cisPro motif, important for rejection of L-amino acids motif; that stretch reads GP.

The protein belongs to the DTD family. As to quaternary structure, homodimer.

It localises to the cytoplasm. It catalyses the reaction glycyl-tRNA(Ala) + H2O = tRNA(Ala) + glycine + H(+). The catalysed reaction is a D-aminoacyl-tRNA + H2O = a tRNA + a D-alpha-amino acid + H(+). An aminoacyl-tRNA editing enzyme that deacylates mischarged D-aminoacyl-tRNAs. Also deacylates mischarged glycyl-tRNA(Ala), protecting cells against glycine mischarging by AlaRS. Acts via tRNA-based rather than protein-based catalysis; rejects L-amino acids rather than detecting D-amino acids in the active site. By recycling D-aminoacyl-tRNA to D-amino acids and free tRNA molecules, this enzyme counteracts the toxicity associated with the formation of D-aminoacyl-tRNA entities in vivo and helps enforce protein L-homochirality. In Delftia acidovorans (strain DSM 14801 / SPH-1), this protein is D-aminoacyl-tRNA deacylase.